A 456-amino-acid polypeptide reads, in one-letter code: ATP-dependent protease ATPase subunit HslU (456 aa).

ATP is bound by residues Val-18, 60–65 (GVGKTE), Asp-269, Glu-334, and Arg-406.

Belongs to the ClpX chaperone family. HslU subfamily. As to quaternary structure, a double ring-shaped homohexamer of HslV is capped on each side by a ring-shaped HslU homohexamer. The assembly of the HslU/HslV complex is dependent on binding of ATP.

It is found in the cytoplasm. Its function is as follows. ATPase subunit of a proteasome-like degradation complex; this subunit has chaperone activity. The binding of ATP and its subsequent hydrolysis by HslU are essential for unfolding of protein substrates subsequently hydrolyzed by HslV. HslU recognizes the N-terminal part of its protein substrates and unfolds these before they are guided to HslV for hydrolysis. This is ATP-dependent protease ATPase subunit HslU from Desulfosudis oleivorans (strain DSM 6200 / JCM 39069 / Hxd3) (Desulfococcus oleovorans).